The primary structure comprises 489 residues: uncharacterized protein (489 aa).

4 disordered regions span residues 1–94 (MIEE…GSLD), 109–229 (NRNQ…SDDD), 300–389 (DDNI…TSIQ), and 428–461 (SESG…TLVK). Low complexity-rich tracts occupy residues 43–53 (LLVQQSNQSVK) and 64–77 (SNGF…NIHD). Acidic residues predominate over residues 121–138 (NFSEDDEDDDAEDDDSSD). The segment covering 144–154 (KKNKPKKPSKL) has biased composition (basic residues). The segment covering 155 to 164 (MKHDSVDGKN) has biased composition (basic and acidic residues). Basic residues predominate over residues 173 to 199 (SKKKVQHQLKEKNKKKGIKNDKKKSKP). A compositionally biased stretch (acidic residues) spans 308–343 (NDNDNDNDDDNDNDNDNDNDNDNDNDDDENGEDNGE). 2 stretches are compositionally biased toward low complexity: residues 344–389 (DLNI…TSIQ) and 433–449 (SISS…SSKS).

This is an uncharacterized protein from Dictyostelium discoideum (Social amoeba).